The primary structure comprises 225 residues: Ribonuclease T (225 aa).

The segment at 1-21 (MSEDHFDDEHEGHGGGGGSRH) is disordered. Positions 33–207 (VVVDVETGGF…YDTEKTAELF (175 aa)) constitute an Exonuclease domain. Mg(2+) contacts are provided by D36, E38, H194, and D199. Residue H194 is the Proton donor/acceptor of the active site.

This sequence belongs to the RNase T family. As to quaternary structure, homodimer. Mg(2+) is required as a cofactor.

Functionally, trims short 3' overhangs of a variety of RNA species, leaving a one or two nucleotide 3' overhang. Responsible for the end-turnover of tRNA: specifically removes the terminal AMP residue from uncharged tRNA (tRNA-C-C-A). Also appears to be involved in tRNA biosynthesis. The chain is Ribonuclease T from Pseudomonas syringae pv. syringae (strain B728a).